Reading from the N-terminus, the 210-residue chain is Isochorismatase domain-containing protein 2 (210 aa).

S7 bears the Phosphoserine mark.

Belongs to the isochorismatase family. Interacts with CDKN2A.

The protein resides in the cytoplasm. The protein localises to the nucleus. The chain is Isochorismatase domain-containing protein 2 (Isoc2) from Rattus norvegicus (Rat).